Here is a 130-residue protein sequence, read N- to C-terminus: MKHKRAIPNRGLRVADQIQRDVAGLIRELKDPRIGMVTIQAVEVTPDYAHAKVFFSVLIGDPAECAAALNEAAGYLRNSLFKRLQIHTVPTLHFQFDRTTERAADLNALIHQANATRAKDADDQPGATEA.

Belongs to the RbfA family. In terms of assembly, monomer. Binds 30S ribosomal subunits, but not 50S ribosomal subunits or 70S ribosomes.

It localises to the cytoplasm. Functionally, one of several proteins that assist in the late maturation steps of the functional core of the 30S ribosomal subunit. Associates with free 30S ribosomal subunits (but not with 30S subunits that are part of 70S ribosomes or polysomes). Required for efficient processing of 16S rRNA. May interact with the 5'-terminal helix region of 16S rRNA. The polypeptide is Ribosome-binding factor A (Methylibium petroleiphilum (strain ATCC BAA-1232 / LMG 22953 / PM1)).